A 160-amino-acid chain; its full sequence is Cyanate hydratase (160 aa).

Active-site residues include R100, E103, and S126.

It belongs to the cyanase family.

It catalyses the reaction cyanate + hydrogencarbonate + 3 H(+) = NH4(+) + 2 CO2. Functionally, catalyzes the reaction of cyanate with bicarbonate to produce ammonia and carbon dioxide. This Aspergillus niger (strain ATCC MYA-4892 / CBS 513.88 / FGSC A1513) protein is Cyanate hydratase.